The following is a 452-amino-acid chain: Molybdate-anion transporter (452 aa).

Helical transmembrane passes span 1–21 (MLLT…VLEF), 45–65 (YDFY…GPYL), 79–99 (IAII…VSAP), 130–150 (FVLI…FSSF), 180–200 (NGGI…WLGL), 201–221 (GPAS…ALVI), 251–271 (VLLL…FIFL), 281–301 (TPLG…SSLY), 316–336 (VLCL…FSTA), 346–366 (LLAF…MGFL), 377–397 (IGVL…GLLV), and 410–430 (MFSL…SLFT).

It belongs to the major facilitator superfamily.

Its subcellular location is the cell membrane. In terms of biological role, mediates high-affinity intracellular uptake of the rare oligo-element molybdenum. In Xenopus tropicalis (Western clawed frog), this protein is Molybdate-anion transporter (mfsd5).